The chain runs to 166 residues: Ribosome maturation factor RimM (166 aa).

Residues 94-165 enclose the PRC barrel domain; sequence EGEYYLGKLI…TIELKVLDLL (72 aa).

Belongs to the RimM family. As to quaternary structure, binds ribosomal protein uS19.

It localises to the cytoplasm. In terms of biological role, an accessory protein needed during the final step in the assembly of 30S ribosomal subunit, possibly for assembly of the head region. Essential for efficient processing of 16S rRNA. May be needed both before and after RbfA during the maturation of 16S rRNA. It has affinity for free ribosomal 30S subunits but not for 70S ribosomes. In Borrelia garinii subsp. bavariensis (strain ATCC BAA-2496 / DSM 23469 / PBi) (Borreliella bavariensis), this protein is Ribosome maturation factor RimM.